Here is a 284-residue protein sequence, read N- to C-terminus: 4-diphosphocytidyl-2-C-methyl-D-erythritol kinase (284 aa).

K14 is an active-site residue. 98–108 (PMGGGLGGGSS) is an ATP binding site. Residue D140 is part of the active site.

This sequence belongs to the GHMP kinase family. IspE subfamily.

The catalysed reaction is 4-CDP-2-C-methyl-D-erythritol + ATP = 4-CDP-2-C-methyl-D-erythritol 2-phosphate + ADP + H(+). It participates in isoprenoid biosynthesis; isopentenyl diphosphate biosynthesis via DXP pathway; isopentenyl diphosphate from 1-deoxy-D-xylulose 5-phosphate: step 3/6. In terms of biological role, catalyzes the phosphorylation of the position 2 hydroxy group of 4-diphosphocytidyl-2C-methyl-D-erythritol. This Shewanella sp. (strain MR-7) protein is 4-diphosphocytidyl-2-C-methyl-D-erythritol kinase.